A 290-amino-acid polypeptide reads, in one-letter code: Nucleotide-binding protein Sde_3181 (290 aa).

8 to 15 (GRSGSGKT) serves as a coordination point for ATP. 60–63 (DARN) serves as a coordination point for GTP.

Belongs to the RapZ-like family.

Functionally, displays ATPase and GTPase activities. This Saccharophagus degradans (strain 2-40 / ATCC 43961 / DSM 17024) protein is Nucleotide-binding protein Sde_3181.